We begin with the raw amino-acid sequence, 396 residues long: Bone morphogenetic protein 2 (396 aa).

Residues 1 to 23 (MVAGTRCLLALLLPQVLLGGAAG) form the signal peptide. Residues 24 to 282 (LVPELGRRKF…GHPLHKREKR (259 aa)) constitute a propeptide, cleaved by PCSK5. The interval 84 to 121 (RRHSGQPGSPAPDHRLERAASRANTVRSFHHEESLEEL) is disordered. At Ser-87 the chain carries Phosphoserine. 4 N-linked (GlcNAc...) asparagine glycosylation sites follow: Asn-135, Asn-163, Asn-164, and Asn-200. The disordered stretch occupies residues 271 to 293 (GKGHPLHKREKRQAKHKQRKRLK). Residues 274–293 (HPLHKREKRQAKHKQRKRLK) are compositionally biased toward basic residues. Cystine bridges form between Cys-296/Cys-361, Cys-325/Cys-393, and Cys-329/Cys-395. An N-linked (GlcNAc...) (high mannose) asparagine glycan is attached at Asn-338.

Belongs to the TGF-beta family. Homodimer; disulfide-linked. Interacts with SOSTDC1. Interacts with GREM2, RGMA, RGMB and RGMC. Interacts with ASPN. Interacts with MAFP5. Interacts with FBN1 (via N-terminal domain) and FBN2. Interacts with type I receptor BMPR1A. Interacts with type II receptor BMPR2. Interacts with SCUBE3. Interacts with TNFAIP6 (primarily via Link domain); this interaction is inhibited by hyaluronan. Interacts with ERFE. Interacts with BMPR1A/ALK3; the interaction may induce HAMP expression. Forms heterodimers with BMP6 in vitro; the heterodimer then binds to its receptor BMPR1A /ALK3 and may induce HAMP expression. Interacts with TGFBR3. In terms of tissue distribution, particularly abundant in lung, spleen and colon and in low but significant levels in heart, brain, placenta, liver, skeletal muscle, kidney, pancreas, prostate, ovary and small intestine.

The protein resides in the secreted. Growth factor of the TGF-beta superfamily that plays essential roles in many developmental processes, including cardiogenesis, neurogenesis, and osteogenesis. Induces cartilage and bone formation. Initiates the canonical BMP signaling cascade by associating with type I receptor BMPR1A and type II receptor BMPR2. Once all three components are bound together in a complex at the cell surface, BMPR2 phosphorylates and activates BMPR1A. In turn, BMPR1A propagates signal by phosphorylating SMAD1/5/8 that travel to the nucleus and act as activators and repressors of transcription of target genes. Also acts to promote expression of HAMP, via the interaction with its receptor BMPR1A/ALK3. Can also signal through non-canonical pathways such as ERK/MAP kinase signaling cascade that regulates osteoblast differentiation. Also stimulates the differentiation of myoblasts into osteoblasts via the EIF2AK3-EIF2A-ATF4 pathway by stimulating EIF2A phosphorylation which leads to increased expression of ATF4 which plays a central role in osteoblast differentiation. Acts as a positive regulator of odontoblast differentiation during mesenchymal tooth germ formation, expression is repressed during the bell stage by MSX1-mediated inhibition of CTNNB1 signaling. The chain is Bone morphogenetic protein 2 (BMP2) from Homo sapiens (Human).